The following is a 367-amino-acid chain: FAD synthetase 2, chloroplastic (367 aa).

The N-terminal 57 residues, 1–57, are a transit peptide targeting the chloroplast; that stretch reads MLCGGSRVLQHLSDHNHHNSIGLGLGFCGAKIVQLSSFFLRPSQAMAKSHHFSRKLR.

It depends on Mg(2+) as a cofactor.

It is found in the plastid. It localises to the chloroplast. The enzyme catalyses FMN + ATP + H(+) = FAD + diphosphate. It participates in cofactor biosynthesis; FAD biosynthesis; FAD from FMN: step 1/1. Catalyzes the adenylation of flavin mononucleotide (FMN) to form flavin adenine dinucleotide (FAD) coenzyme. This chain is FAD synthetase 2, chloroplastic, found in Arabidopsis thaliana (Mouse-ear cress).